The chain runs to 248 residues: MTRLKELPLTALQFYATAPYPCSYLPNKTARSQVATPSHLIHADIYNELLNAGFRRSGLYTYRPYCDECKACVATRILVNQFAPTRSQRRAWKKHAGLVASVLNLGYQEEHYQLYQNYQNQRHAGGDMDSDDQDQYMQFLLQSRVNSRIVEYRDGPQDPHPGRLRMVSMIDLLEQGISSVYTFYDASDTTASFGSYSILWQLEQTKELNLPYLYLGYYIKDSEKMSYKAKYQPMEGLIDDHWQALTGS.

This sequence belongs to the R-transferase family. Bpt subfamily.

The protein localises to the cytoplasm. The enzyme catalyses N-terminal L-glutamyl-[protein] + L-leucyl-tRNA(Leu) = N-terminal L-leucyl-L-glutamyl-[protein] + tRNA(Leu) + H(+). The catalysed reaction is N-terminal L-aspartyl-[protein] + L-leucyl-tRNA(Leu) = N-terminal L-leucyl-L-aspartyl-[protein] + tRNA(Leu) + H(+). Functionally, functions in the N-end rule pathway of protein degradation where it conjugates Leu from its aminoacyl-tRNA to the N-termini of proteins containing an N-terminal aspartate or glutamate. This is Aspartate/glutamate leucyltransferase from Polynucleobacter asymbioticus (strain DSM 18221 / CIP 109841 / QLW-P1DMWA-1) (Polynucleobacter necessarius subsp. asymbioticus).